The sequence spans 424 residues: Serine--tRNA ligase (424 aa).

230 to 232 (TAE) lines the L-serine pocket. Residue 261 to 263 (RSE) coordinates ATP. Residue E284 coordinates L-serine. 348 to 351 (EISS) serves as a coordination point for ATP. S384 is an L-serine binding site.

Belongs to the class-II aminoacyl-tRNA synthetase family. Type-1 seryl-tRNA synthetase subfamily. As to quaternary structure, homodimer. The tRNA molecule binds across the dimer.

The protein localises to the cytoplasm. The catalysed reaction is tRNA(Ser) + L-serine + ATP = L-seryl-tRNA(Ser) + AMP + diphosphate + H(+). It carries out the reaction tRNA(Sec) + L-serine + ATP = L-seryl-tRNA(Sec) + AMP + diphosphate + H(+). Its pathway is aminoacyl-tRNA biosynthesis; selenocysteinyl-tRNA(Sec) biosynthesis; L-seryl-tRNA(Sec) from L-serine and tRNA(Sec): step 1/1. Functionally, catalyzes the attachment of serine to tRNA(Ser). Is also able to aminoacylate tRNA(Sec) with serine, to form the misacylated tRNA L-seryl-tRNA(Sec), which will be further converted into selenocysteinyl-tRNA(Sec). The protein is Serine--tRNA ligase of Streptococcus pneumoniae serotype 2 (strain D39 / NCTC 7466).